A 211-amino-acid chain; its full sequence is Uracil phosphoribosyltransferase (211 aa).

Residues Arg-77, Arg-102, and 129–137 (DPMLATGGS) each bind 5-phospho-alpha-D-ribose 1-diphosphate. Uracil is bound by residues Ile-192 and 197 to 199 (GDA). Asp-198 contributes to the 5-phospho-alpha-D-ribose 1-diphosphate binding site.

Belongs to the UPRTase family. Mg(2+) serves as cofactor.

It catalyses the reaction UMP + diphosphate = 5-phospho-alpha-D-ribose 1-diphosphate + uracil. The protein operates within pyrimidine metabolism; UMP biosynthesis via salvage pathway; UMP from uracil: step 1/1. Its activity is regulated as follows. Allosterically activated by GTP. In terms of biological role, catalyzes the conversion of uracil and 5-phospho-alpha-D-ribose 1-diphosphate (PRPP) to UMP and diphosphate. The polypeptide is Uracil phosphoribosyltransferase (Corynebacterium efficiens (strain DSM 44549 / YS-314 / AJ 12310 / JCM 11189 / NBRC 100395)).